Consider the following 341-residue polypeptide: Ribosomal RNA small subunit methyltransferase H (341 aa).

S-adenosyl-L-methionine is bound by residues Gly-47–Tyr-49, Asp-64, Phe-91, Asp-109, and Gln-116.

It belongs to the methyltransferase superfamily. RsmH family.

Its subcellular location is the cytoplasm. The enzyme catalyses cytidine(1402) in 16S rRNA + S-adenosyl-L-methionine = N(4)-methylcytidine(1402) in 16S rRNA + S-adenosyl-L-homocysteine + H(+). In terms of biological role, specifically methylates the N4 position of cytidine in position 1402 (C1402) of 16S rRNA. The polypeptide is Ribosomal RNA small subunit methyltransferase H (Sinorhizobium medicae (strain WSM419) (Ensifer medicae)).